The chain runs to 566 residues: Pentatricopeptide repeat-containing protein At4g11690 (566 aa).

PPR repeat units lie at residues 93 to 127 (KFRL…GFVP), 128 to 158 (GSNC…NKSK), 162 to 196 (DVYS…GFSP), 197 to 231 (NVVI…GLVA), 232 to 266 (NERT…GVFP), 267 to 301 (NLYT…GVSC), 302 to 336 (NIVT…GINP), 337 to 371 (NLIT…GLSP), 372 to 406 (SLVT…GIKP), 407 to 441 (SKVT…GLVP), 442 to 476 (DVHT…NCEP), 477 to 511 (NEVI…ELAP), and 512 to 546 (NVAS…GIDP).

It belongs to the PPR family. P subfamily.

The sequence is that of Pentatricopeptide repeat-containing protein At4g11690 from Arabidopsis thaliana (Mouse-ear cress).